The following is a 341-amino-acid chain: Glycerol-3-phosphate dehydrogenase [NAD(P)+] (341 aa).

4 residues coordinate NADPH: Ser14, Phe15, Arg35, and Lys108. Residues Lys108 and Gly136 each contribute to the sn-glycerol 3-phosphate site. An NADPH-binding site is contributed by Ala140. The sn-glycerol 3-phosphate site is built by Lys191, Asp244, Ser254, Arg255, and Asn256. The active-site Proton acceptor is Lys191. Position 255 (Arg255) interacts with NADPH. The NADPH site is built by Val279 and Glu281.

Belongs to the NAD-dependent glycerol-3-phosphate dehydrogenase family.

The protein resides in the cytoplasm. The enzyme catalyses sn-glycerol 3-phosphate + NAD(+) = dihydroxyacetone phosphate + NADH + H(+). It carries out the reaction sn-glycerol 3-phosphate + NADP(+) = dihydroxyacetone phosphate + NADPH + H(+). Its pathway is membrane lipid metabolism; glycerophospholipid metabolism. Functionally, catalyzes the reduction of the glycolytic intermediate dihydroxyacetone phosphate (DHAP) to sn-glycerol 3-phosphate (G3P), the key precursor for phospholipid synthesis. This is Glycerol-3-phosphate dehydrogenase [NAD(P)+] from Pseudomonas putida (strain ATCC 700007 / DSM 6899 / JCM 31910 / BCRC 17059 / LMG 24140 / F1).